The following is a 307-amino-acid chain: MAAITAGLVKELRDKTGAGMMDCKSALTETNGDIEAAIDWLRKKGLAKAAKKAGRVAAEGLVAVESSGHYAAAIEVNAETDFVARNPDFQAFVREAAKVALNTDGTVEAVAAAKFPGESVTVAERLTALIATIGENMTLRRSAKLSVSAGVIASYVHGAVVEGQGRIGVLVALESTGDVEKLSTLGRQIAMHIAALNPLALDASGISEETIAREKAILLEKHQGKPANVQDKIAESGIKSFFKEVTLLDQAFVHDGSKSVSQVLKEAEGQVGAPLKLTGFVRFALGEGIEKEETDFAAEVAAAAGQS.

Residues 80-83 (TDFV) form an involved in Mg(2+) ion dislocation from EF-Tu region.

This sequence belongs to the EF-Ts family.

The protein localises to the cytoplasm. Associates with the EF-Tu.GDP complex and induces the exchange of GDP to GTP. It remains bound to the aminoacyl-tRNA.EF-Tu.GTP complex up to the GTP hydrolysis stage on the ribosome. This is Elongation factor Ts from Xanthobacter autotrophicus (strain ATCC BAA-1158 / Py2).